Here is a 290-residue protein sequence, read N- to C-terminus: uncharacterized protein (290 aa).

The HTH lysR-type domain maps to 1 to 61; it reads MVMNMNHLHI…RDKHHGLMLT (61 aa). Residues 20-39 constitute a DNA-binding region (H-T-H motif); sequence ITEAAKELFISQPAVSKAIK.

This sequence belongs to the LysR transcriptional regulatory family.

This is an uncharacterized protein from Bacillus subtilis (strain 168).